A 336-amino-acid polypeptide reads, in one-letter code: Dihydrolipoyl dehydrogenase (336 aa).

FAD-binding positions include 34 to 42 (EKEVVGGIC), Lys51, and Gly115. Cysteines 42 and 47 form a disulfide. Residues 180–184 (GGGVI), Glu203, Val237, and 264–267 (SVGT) each bind NAD(+). Asp304 and Ala312 together coordinate FAD.

Belongs to the class-I pyridine nucleotide-disulfide oxidoreductase family. In terms of assembly, homodimer. Requires FAD as cofactor.

It is found in the cytoplasm. It carries out the reaction N(6)-[(R)-dihydrolipoyl]-L-lysyl-[protein] + NAD(+) = N(6)-[(R)-lipoyl]-L-lysyl-[protein] + NADH + H(+). Its function is as follows. Lipoamide dehydrogenase is a component of the alpha-ketoacid dehydrogenase complexes. This is Dihydrolipoyl dehydrogenase (pdhD) from Acholeplasma laidlawii.